We begin with the raw amino-acid sequence, 200 residues long: Large ribosomal subunit protein uL22c (200 aa).

This sequence belongs to the universal ribosomal protein uL22 family. In terms of assembly, part of the 50S ribosomal subunit.

It localises to the plastid. The protein localises to the chloroplast. In terms of biological role, this protein binds specifically to 23S rRNA. Functionally, the globular domain of the protein is located near the polypeptide exit tunnel on the outside of the subunit, while an extended beta-hairpin is found that lines the wall of the exit tunnel in the center of the 70S ribosome. This Medicago sativa (Alfalfa) protein is Large ribosomal subunit protein uL22c (rpl22).